A 122-amino-acid polypeptide reads, in one-letter code: Large ribosomal subunit protein uL14c (122 aa).

This sequence belongs to the universal ribosomal protein uL14 family. As to quaternary structure, part of the 50S ribosomal subunit.

The protein localises to the plastid. Binds to 23S rRNA. This chain is Large ribosomal subunit protein uL14c, found in Cuscuta obtusiflora (Peruvian dodder).